A 226-amino-acid polypeptide reads, in one-letter code: ATP synthase F(0) complex subunit a (226 aa).

6 helical membrane passes run 6–26, 68–88, 97–117, 138–158, 164–184, and 189–209; these read FASF…IILF, WSLM…LGLL, QLSM…VMGF, IPML…ALAV, ITAG…LSTI, and TLII…VALI.

It belongs to the ATPase A chain family. As to quaternary structure, component of the ATP synthase complex composed at least of ATP5F1A/subunit alpha, ATP5F1B/subunit beta, ATP5MC1/subunit c (homooctomer), MT-ATP6/subunit a, MT-ATP8/subunit 8, ATP5ME/subunit e, ATP5MF/subunit f, ATP5MG/subunit g, ATP5MK/subunit k, ATP5MJ/subunit j, ATP5F1C/subunit gamma, ATP5F1D/subunit delta, ATP5F1E/subunit epsilon, ATP5PF/subunit F6, ATP5PB/subunit b, ATP5PD/subunit d, ATP5PO/subunit OSCP. ATP synthase complex consists of a soluble F(1) head domain (subunits alpha(3) and beta(3)) - the catalytic core - and a membrane F(0) domain - the membrane proton channel (subunits c, a, 8, e, f, g, k and j). These two domains are linked by a central stalk (subunits gamma, delta, and epsilon) rotating inside the F1 region and a stationary peripheral stalk (subunits F6, b, d, and OSCP). Interacts with DNAJC30; interaction is direct.

It localises to the mitochondrion inner membrane. It carries out the reaction H(+)(in) = H(+)(out). Its function is as follows. Subunit a, of the mitochondrial membrane ATP synthase complex (F(1)F(0) ATP synthase or Complex V) that produces ATP from ADP in the presence of a proton gradient across the membrane which is generated by electron transport complexes of the respiratory chain. ATP synthase complex consist of a soluble F(1) head domain - the catalytic core - and a membrane F(1) domain - the membrane proton channel. These two domains are linked by a central stalk rotating inside the F(1) region and a stationary peripheral stalk. During catalysis, ATP synthesis in the catalytic domain of F(1) is coupled via a rotary mechanism of the central stalk subunits to proton translocation. With the subunit c (ATP5MC1), forms the proton-conducting channel in the F(0) domain, that contains two crucial half-channels (inlet and outlet) that facilitate proton movement from the mitochondrial intermembrane space (IMS) into the matrix. Protons are taken up via the inlet half-channel and released through the outlet half-channel, following a Grotthuss mechanism. In Pan paniscus (Pygmy chimpanzee), this protein is ATP synthase F(0) complex subunit a.